A 233-amino-acid polypeptide reads, in one-letter code: Homeobox protein EMX1 (233 aa).

The homeobox DNA-binding region spans 135–194 (PKRIRTAFSPSQLLRLERAFEKNHYVVGAERKQLASSLSLSETQVKVWFQNRRTKYKRQK). Positions 192-233 (RQKLEEEGPDSDQKKKGSHHINRWRLATKQPNGEDIDVTSND) are disordered. Residues 193-206 (QKLEEEGPDSDQKK) are compositionally biased toward basic and acidic residues.

It belongs to the EMX homeobox family.

It is found in the nucleus. In terms of biological role, may function in combinations with OTX1/2 to specify cell fates in the developing central nervous system. This Xenopus tropicalis (Western clawed frog) protein is Homeobox protein EMX1 (emx1).